The chain runs to 385 residues: Flap endonuclease 1 (385 aa).

Residues 1–104 (MGILGLSKLI…GELAKRAERR (104 aa)) form an N-domain region. Asp34 contributes to the Mg(2+) binding site. DNA contacts are provided by Arg47 and Arg70. Mg(2+) contacts are provided by Asp86, Glu158, Glu160, Asp179, and Asp181. An I-domain region spans residues 122–253 (GIEKFNRRLV…KRAIELINTY (132 aa)). Glu158 lines the DNA pocket. The DNA site is built by Gly231 and Asp233. Asp233 contributes to the Mg(2+) binding site. Residues 336 to 344 (TQVRLDSFF) are interaction with PCNA. The interval 346 to 385 (TLPSTPNATNAAKRKAEEAKKSANNKKAKTSGGGRGRRPK) is disordered. Residues 368–385 (ANNKKAKTSGGGRGRRPK) show a composition bias toward basic residues.

Belongs to the XPG/RAD2 endonuclease family. FEN1 subfamily. As to quaternary structure, interacts with PCNA. Three molecules of FEN1 bind to one PCNA trimer with each molecule binding to one PCNA monomer. PCNA stimulates the nuclease activity without altering cleavage specificity. The cofactor is Mg(2+). Phosphorylated. Phosphorylation upon DNA damage induces relocalization to the nuclear plasma.

The protein resides in the nucleus. It localises to the nucleolus. The protein localises to the nucleoplasm. It is found in the mitochondrion. Structure-specific nuclease with 5'-flap endonuclease and 5'-3' exonuclease activities involved in DNA replication and repair. During DNA replication, cleaves the 5'-overhanging flap structure that is generated by displacement synthesis when DNA polymerase encounters the 5'-end of a downstream Okazaki fragment. It enters the flap from the 5'-end and then tracks to cleave the flap base, leaving a nick for ligation. Also involved in the long patch base excision repair (LP-BER) pathway, by cleaving within the apurinic/apyrimidinic (AP) site-terminated flap. Acts as a genome stabilization factor that prevents flaps from equilibrating into structures that lead to duplications and deletions. Also possesses 5'-3' exonuclease activity on nicked or gapped double-stranded DNA, and exhibits RNase H activity. Also involved in replication and repair of rDNA and in repairing mitochondrial DNA. This Drosophila melanogaster (Fruit fly) protein is Flap endonuclease 1.